The chain runs to 170 residues: Adenine phosphoribosyltransferase (170 aa).

This sequence belongs to the purine/pyrimidine phosphoribosyltransferase family. In terms of assembly, homodimer.

It localises to the cytoplasm. The enzyme catalyses AMP + diphosphate = 5-phospho-alpha-D-ribose 1-diphosphate + adenine. It participates in purine metabolism; AMP biosynthesis via salvage pathway; AMP from adenine: step 1/1. In terms of biological role, catalyzes a salvage reaction resulting in the formation of AMP, that is energically less costly than de novo synthesis. This Lysinibacillus sphaericus (strain C3-41) protein is Adenine phosphoribosyltransferase.